The sequence spans 804 residues: MFVSYKWLQEYVNLDGMTPEILAEKITRSGIEVEGIEYKGEGIKGVVIGHVLEREQHPNADKLNKCLVDIGEEEPVQIICGAPNVDKGQKVAVATVGAVLPGNFKIKKAKLRGEASNGMICSLQELGIQGKLVPKEYAEGIFVFPGDAETGADALQSLALDDAVLELGLTPNRADAMNMLGVAYEVAAILGREVKLPETAYQAGAEKAADYISVKIEDPEANPLYAAKIIKDVKIGPSPLWMQTKLINAGIRPHNNVVDVTNFVLLEYGQPLHAFDYDRFGSKEVVIRKAYENETITTLDEQERTLTTEHLVITNGSSPQAVAGVMGGAESEVREDTATVLLEAAYFNGQTVRKASKDLGLRSESSVRFEKGIDPARVRLAAERAADLISRYAGGTVLEGTVEENHLDIKENVIRLSVDKVTKVLGMSISKEEMVNIFERLGFAVEDAERELVVTVPSRRGDIAIEEDLIEEVARLYGYDNIPSTLPEVTGFAGGLTPYQDKRRKVRRFLEGAGLSQAITYSLTNDKKATAYALEKSFKTILSLPMSEERSVLRHSLLPNLLDSVAYNLARQADSAAFYEIGSVFLKAEEHTKPVEKEHVAGAVTGLWHKNLWQGEKKPVDFFVVKGIVEGLLEKLGITEGIEFAQSERKELHPGRTANILHNGSLVGFIGQLHPSVEKELDLSDTYVFELDLHELLRLDVPEITYTPIPKYPSVTRDIALVVDKQTTAGQLEDVIKTAGGKWLKEVHVFDVYEGEHMEEGKKSVAFSLQYLNPEQTLTEEEVTKVHDQVLKALEDKYQAVLRG.

The tRNA-binding domain occupies 40–155; sequence GEGIKGVVIG…GDAETGADAL (116 aa). A B5 domain is found at 409–484; that stretch reads IKENVIRLSV…RLYGYDNIPS (76 aa). Residues D462, D468, E471, and E472 each coordinate Mg(2+). One can recognise an FDX-ACB domain in the interval 710-803; sequence PKYPSVTRDI…LEDKYQAVLR (94 aa).

It belongs to the phenylalanyl-tRNA synthetase beta subunit family. Type 1 subfamily. Tetramer of two alpha and two beta subunits. Mg(2+) serves as cofactor.

Its subcellular location is the cytoplasm. It carries out the reaction tRNA(Phe) + L-phenylalanine + ATP = L-phenylalanyl-tRNA(Phe) + AMP + diphosphate + H(+). The protein is Phenylalanine--tRNA ligase beta subunit of Bacillus licheniformis (strain ATCC 14580 / DSM 13 / JCM 2505 / CCUG 7422 / NBRC 12200 / NCIMB 9375 / NCTC 10341 / NRRL NRS-1264 / Gibson 46).